The primary structure comprises 298 residues: Protease HtpX homolog (298 aa).

The next 2 membrane-spanning stretches (helical) occupy residues Leu-15–Phe-35 and Pro-39–Gln-59. Zn(2+) is bound at residue His-143. Glu-144 is an active-site residue. His-147 serves as a coordination point for Zn(2+). The next 2 membrane-spanning stretches (helical) occupy residues Ile-153–Ala-173 and Met-197–Leu-217. Position 227 (Glu-227) interacts with Zn(2+).

The protein belongs to the peptidase M48B family. Requires Zn(2+) as cofactor.

It localises to the cell membrane. The polypeptide is Protease HtpX homolog (Lactobacillus helveticus (strain DPC 4571)).